Consider the following 233-residue polypeptide: 7-cyano-7-deazaguanine synthase (233 aa).

Cys-7–Ala-17 contacts ATP. 4 residues coordinate Zn(2+): Cys-185, Cys-193, Cys-196, and Cys-199.

Belongs to the QueC family. Zn(2+) serves as cofactor.

The catalysed reaction is 7-carboxy-7-deazaguanine + NH4(+) + ATP = 7-cyano-7-deazaguanine + ADP + phosphate + H2O + H(+). The protein operates within purine metabolism; 7-cyano-7-deazaguanine biosynthesis. In terms of biological role, catalyzes the ATP-dependent conversion of 7-carboxy-7-deazaguanine (CDG) to 7-cyano-7-deazaguanine (preQ(0)). The sequence is that of 7-cyano-7-deazaguanine synthase from Ruegeria sp. (strain TM1040) (Silicibacter sp.).